The following is a 333-amino-acid chain: tRNA N6-adenosine threonylcarbamoyltransferase (333 aa).

Fe cation-binding residues include His108 and His112. Substrate-binding positions include 129–133 (LVSGG), Asp161, Glu178, and Ser258. Asp286 contacts Fe cation.

This sequence belongs to the KAE1 / TsaD family. Requires Fe(2+) as cofactor.

It is found in the cytoplasm. The catalysed reaction is L-threonylcarbamoyladenylate + adenosine(37) in tRNA = N(6)-L-threonylcarbamoyladenosine(37) in tRNA + AMP + H(+). In terms of biological role, required for the formation of a threonylcarbamoyl group on adenosine at position 37 (t(6)A37) in tRNAs that read codons beginning with adenine. Is probably involved in the transfer of the threonylcarbamoyl moiety of threonylcarbamoyl-AMP (TC-AMP) to the N6 group of A37. In Pyrobaculum islandicum (strain DSM 4184 / JCM 9189 / GEO3), this protein is tRNA N6-adenosine threonylcarbamoyltransferase.